A 203-amino-acid chain; its full sequence is Proteasome subunit beta 2 (203 aa).

Positions 1–9 are cleaved as a propeptide — removed in mature form; by autocatalysis; that stretch reads MGEEVQIGA. The active-site Nucleophile is the Thr10.

It belongs to the peptidase T1B family. In terms of assembly, the 20S proteasome core is composed of 14 alpha and 14 beta subunits that assemble into four stacked heptameric rings, resulting in a barrel-shaped structure. The two inner rings, each composed of seven catalytic beta subunits, are sandwiched by two outer rings, each composed of seven alpha subunits. The catalytic chamber with the active sites is on the inside of the barrel. Has a gated structure, the ends of the cylinder being occluded by the N-termini of the alpha-subunits. Is capped at one or both ends by the proteasome regulatory ATPase, PAN.

Its subcellular location is the cytoplasm. It catalyses the reaction Cleavage of peptide bonds with very broad specificity.. With respect to regulation, the formation of the proteasomal ATPase PAN-20S proteasome complex, via the docking of the C-termini of PAN into the intersubunit pockets in the alpha-rings, triggers opening of the gate for substrate entry. Interconversion between the open-gate and close-gate conformations leads to a dynamic regulation of the 20S proteasome proteolysis activity. Functionally, component of the proteasome core, a large protease complex with broad specificity involved in protein degradation. This Pyrobaculum aerophilum (strain ATCC 51768 / DSM 7523 / JCM 9630 / CIP 104966 / NBRC 100827 / IM2) protein is Proteasome subunit beta 2.